We begin with the raw amino-acid sequence, 343 residues long: Allergin-1 (343 aa).

The N-terminal stretch at 1–19 (MWSHLNRLLFWSIFSSVTC) is a signal peptide. Residues 20–227 (RKAVLDCEAM…GGDSCPFCLK (208 aa)) are Extracellular-facing. 2 consecutive Ig-like C2-type domains span residues 35 to 118 (PSPC…RDFS) and 128 to 213 (PVLN…HPVT). N-linked (GlcNAc...) asparagine glycans are attached at residues N51, N60, N89, N151, N157, and N182. 2 cysteine pairs are disulfide-bonded: C56/C103 and C147/C196. A helical transmembrane segment spans residues 228–248 (LLLPGLLLLLVVIILILAFWV). The Cytoplasmic portion of the chain corresponds to 249-343 (LPKYKTRKAM…SGYVYSELNF (95 aa)). 2 short sequence motifs (ITIM motif) span residues 311-316 (LQYATP) and 336-341 (YVYSEL). 2 positions are modified to phosphotyrosine: Y313 and Y338.

In terms of assembly, monomer. Interacts (tyrosine-phosphorylated) with PTPN6, PTPN11 and INPP5D. In terms of processing, N-glycosylated. As to expression, expressed in myeloid cells (dendritic cells, macrophages and neutrophils, weak expression on B-cells but not in T-cells or natural killer cells), peripheral blood basophils and mast cells (at protein level).

The protein localises to the cell membrane. Its function is as follows. Immunoglobulin-like receptor which plays an inhibitory role in degranulation of mast cells. Negatively regulates IgE-mediated mast cell activation and suppresses the type I immediate hypersensitivity reaction. In Homo sapiens (Human), this protein is Allergin-1 (MILR1).